Here is a 494-residue protein sequence, read N- to C-terminus: Nuclear distribution protein PAC1 (494 aa).

A LisH domain is found at 14–46 (QKNELDKSVLRYLNWNYKQTVRHEHAQDYESVR). The stretch at 90 to 123 (NSIVRLQKKIIELEQNTETLVSQIKDLNTQVSEL) forms a coiled coil. WD repeat units lie at residues 153–192 (NVESSVTSVKLHPNLPIVFVATDHGKLYAFDLFNYTIPLA), 196–244 (SHTK…CKFQ), 251–292 (GHEH…SLKT), 295–334 (PHSQWVRSIDVLGDYIISGSHDTTLRLTHWPSGNGLSVGT), 347–395 (HFIE…LMAH), 415–454 (GHLSWVRDISIRGQYLFSCADDKSVRCWDLNTGQCLHVWE), and 457–492 (HTGFVNCLDLDVDFDSNVTPRQMMVTGGLDCKSNVF).

The protein belongs to the WD repeat LIS1/nudF family. In terms of assembly, self-associates. Interacts with NDL1 and dynein.

The protein resides in the cytoplasm. It localises to the cytoskeleton. The protein localises to the spindle pole. Positively regulates the activity of the minus-end directed microtubule motor protein dynein. Plays a central role in positioning the mitotic spindle at the bud neck during cell division. Targets cytoplasmic dynein to microtubule plus ends, thereby promoting dynein-mediated microtubule sliding along the bud cortex and consequently the movement of the mitotic spindle to the bud neck. The sequence is that of Nuclear distribution protein PAC1 from Saccharomyces cerevisiae (strain RM11-1a) (Baker's yeast).